The chain runs to 149 residues: Putative pre-16S rRNA nuclease (149 aa).

It belongs to the YqgF nuclease family.

The protein resides in the cytoplasm. In terms of biological role, could be a nuclease involved in processing of the 5'-end of pre-16S rRNA. The protein is Putative pre-16S rRNA nuclease of Heliobacterium modesticaldum (strain ATCC 51547 / Ice1).